Consider the following 239-residue polypeptide: Ribose-5-phosphate isomerase A (239 aa).

Residues 31–34, 88–91, and 101–104 each bind substrate; these read FGST, DGAD, and KGGG. Residue E110 is the Proton acceptor of the active site. K128 is a substrate binding site.

Belongs to the ribose 5-phosphate isomerase family. Homodimer.

It carries out the reaction aldehydo-D-ribose 5-phosphate = D-ribulose 5-phosphate. Its pathway is carbohydrate degradation; pentose phosphate pathway; D-ribose 5-phosphate from D-ribulose 5-phosphate (non-oxidative stage): step 1/1. Its function is as follows. Catalyzes the reversible conversion of ribose-5-phosphate to ribulose 5-phosphate. The polypeptide is Ribose-5-phosphate isomerase A (Chloroflexus aurantiacus (strain ATCC 29366 / DSM 635 / J-10-fl)).